We begin with the raw amino-acid sequence, 706 residues long: Kinesin-like protein KIF2A (706 aa).

Positions 1-217 are globular; the sequence is MATANFGKIQ…LDYRPLTTAD (217 aa). A disordered region spans residues 66 to 139; sequence LVPDEEIEPS…AQQNGSVSDI (74 aa). Ser-75 bears the Phosphoserine mark. Phosphothreonine is present on residues Thr-78 and Thr-97. Ser-100 carries the phosphoserine modification. Lys-102 is modified (N6-acetyllysine). Polar residues predominate over residues 123–139; that stretch reads FPEQSSSAQQNGSVSDI. Ser-135 and Ser-140 each carry phosphoserine. The disordered stretch occupies residues 165–186; sequence KLQEKREKRRLQQQELREKRAQ. The region spanning 223-553 is the Kinesin motor domain; the sequence is RICVCVRKRP…LRYANRVKEL (331 aa). Residue 313–320 participates in ATP binding; the sequence is GQTGSGKT. Phosphoserine occurs at positions 556 and 573. Residues 660–699 adopt a coiled-coil conformation; that stretch reads ATQLEAILEQKIDILTELRDKVKSFRAALQEEEQASKQIN.

The protein belongs to the TRAFAC class myosin-kinesin ATPase superfamily. Kinesin family. MCAK/KIF2 subfamily. Interacts with AURKA and PLK1. Interacts with PSRC1. Interacts with MCRS1; the interaction enhances recruitment of KIF2A to the minus ends of spindle microtubules which promotes chromosome alignment.

It localises to the cytoplasm. Its subcellular location is the cytoskeleton. It is found in the microtubule organizing center. The protein localises to the centrosome. The protein resides in the spindle pole. It localises to the spindle. Plus end-directed microtubule-dependent motor required for normal brain development. May regulate microtubule dynamics during axonal growth. Required for normal progression through mitosis. Required for normal congress of chromosomes at the metaphase plate. Required for normal spindle dynamics during mitosis. Promotes spindle turnover. Implicated in formation of bipolar mitotic spindles. Has microtubule depolymerization activity. This is Kinesin-like protein KIF2A (KIF2A) from Homo sapiens (Human).